Consider the following 421-residue polypeptide: Tyrosine--tRNA ligase (421 aa).

L-tyrosine is bound at residue tyrosine 38. The short motif at 43-52 (PTGDSLHIGH) is the 'HIGH' region element. Residues tyrosine 169 and glutamine 173 each contribute to the L-tyrosine site. Positions 231–235 (KFGKS) match the 'KMSKS' region motif. Lysine 234 lines the ATP pocket. The S4 RNA-binding domain maps to 353 to 419 (KNLVDFLVDT…GKKKYTLVHI (67 aa)).

The protein belongs to the class-I aminoacyl-tRNA synthetase family. TyrS type 1 subfamily. Homodimer.

Its subcellular location is the cytoplasm. The catalysed reaction is tRNA(Tyr) + L-tyrosine + ATP = L-tyrosyl-tRNA(Tyr) + AMP + diphosphate + H(+). In terms of biological role, catalyzes the attachment of tyrosine to tRNA(Tyr) in a two-step reaction: tyrosine is first activated by ATP to form Tyr-AMP and then transferred to the acceptor end of tRNA(Tyr). The chain is Tyrosine--tRNA ligase from Lactobacillus delbrueckii subsp. bulgaricus (strain ATCC 11842 / DSM 20081 / BCRC 10696 / JCM 1002 / NBRC 13953 / NCIMB 11778 / NCTC 12712 / WDCM 00102 / Lb 14).